A 111-amino-acid chain; its full sequence is ATP-dependent Clp protease adapter protein ClpS (111 aa).

This sequence belongs to the ClpS family. As to quaternary structure, binds to the N-terminal domain of the chaperone ClpA.

Functionally, involved in the modulation of the specificity of the ClpAP-mediated ATP-dependent protein degradation. This Corynebacterium aurimucosum (strain ATCC 700975 / DSM 44827 / CIP 107346 / CN-1) (Corynebacterium nigricans) protein is ATP-dependent Clp protease adapter protein ClpS.